Here is a 102-residue protein sequence, read N- to C-terminus: NADH-quinone oxidoreductase subunit K (102 aa).

3 helical membrane-spanning segments follow: residues methionine 6–valine 26, isoleucine 30–valine 50, and isoleucine 62–leucine 82.

Belongs to the complex I subunit 4L family. NDH-1 is composed of 13 different subunits. Subunits NuoA, H, J, K, L, M, N constitute the membrane sector of the complex.

It localises to the cell inner membrane. The enzyme catalyses a quinone + NADH + 5 H(+)(in) = a quinol + NAD(+) + 4 H(+)(out). NDH-1 shuttles electrons from NADH, via FMN and iron-sulfur (Fe-S) centers, to quinones in the respiratory chain. The immediate electron acceptor for the enzyme in this species is believed to be ubiquinone. Couples the redox reaction to proton translocation (for every two electrons transferred, four hydrogen ions are translocated across the cytoplasmic membrane), and thus conserves the redox energy in a proton gradient. This is NADH-quinone oxidoreductase subunit K from Azotobacter vinelandii (strain DJ / ATCC BAA-1303).